We begin with the raw amino-acid sequence, 304 residues long: MFDPIGKSGDAFALAKDYALEAKNWGADLSLKAYVDERVAAEDLKVGKCDGAIISGLRGRQFNKYTGSLDAVGALTNMKTAINAYKLLSSPMAAKNMVVGPYEIAGLGTIGPAYLFVNDRSINTLAKAAGKKIGVFKYDEAQPKLVQHVGGQAVSVDVTNAGAKFNNHEIDIVPAPIVAFKPFELYKGLGEKGAIVRFPLTQISADFIIRKDQFPAGFGQKSRTWVASQLNRTFGIIAKYESDIPSKYWMDIPKNEQLNYMKMMREARIQLTKAGIYDPKMMNFLKKVRCKENPSNFECALNDE.

It belongs to the bacterial solute-binding protein 7 family.

Mediates antimicrobial resistance via active efflux. Contributes to resistance to antibiotics such as chloramphenicol, erythromycin and novobiocin. May be part of a tripartite ATP-independent periplasmic (TRAP) transport system. The protein is Probable solute-binding protein AdeT1 of Acinetobacter baumannii.